The following is a 129-amino-acid chain: Dormancy-associated protein 2 (129 aa).

An N-terminal signal peptide occupies residues 1–25; it reads MDSRKAMLILGLLAMVLLISSEVSA. A disordered region spans residues 110-129; the sequence is GGYHGGGGHGGHGGASNNGN.

Belongs to the DRM1/ARP family. Expressed in axilary buds. Detected in growing stems, leaflets and floral organs, but not in roots.

This chain is Dormancy-associated protein 2, found in Pisum sativum (Garden pea).